A 445-amino-acid polypeptide reads, in one-letter code: Probable D-serine dehydratase (445 aa).

Residue Lys116 is modified to N6-(pyridoxal phosphate)lysine.

It belongs to the serine/threonine dehydratase family. DsdA subfamily. The cofactor is pyridoxal 5'-phosphate.

The enzyme catalyses D-serine = pyruvate + NH4(+). This chain is Probable D-serine dehydratase, found in Bacillus mycoides (strain KBAB4) (Bacillus weihenstephanensis).